The sequence spans 489 residues: N-succinylglutamate 5-semialdehyde dehydrogenase (489 aa).

An NAD(+)-binding site is contributed by 221 to 226 (GSSGTG). Active-site residues include Glu-244 and Cys-278.

Belongs to the aldehyde dehydrogenase family. AstD subfamily.

The enzyme catalyses N-succinyl-L-glutamate 5-semialdehyde + NAD(+) + H2O = N-succinyl-L-glutamate + NADH + 2 H(+). It participates in amino-acid degradation; L-arginine degradation via AST pathway; L-glutamate and succinate from L-arginine: step 4/5. Catalyzes the NAD-dependent reduction of succinylglutamate semialdehyde into succinylglutamate. The chain is N-succinylglutamate 5-semialdehyde dehydrogenase from Sorangium cellulosum (strain So ce56) (Polyangium cellulosum (strain So ce56)).